We begin with the raw amino-acid sequence, 122 residues long: NADH-quinone oxidoreductase subunit A (122 aa).

The next 3 membrane-spanning stretches (helical) occupy residues 12–32 (IIIF…VNLI), 66–86 (LVAI…PWAI), and 91–111 (IGGL…VGFI).

It belongs to the complex I subunit 3 family. As to quaternary structure, NDH-1 is composed of 14 different subunits. Subunits NuoA, H, J, K, L, M, N constitute the membrane sector of the complex.

It localises to the cell inner membrane. The catalysed reaction is a quinone + NADH + 5 H(+)(in) = a quinol + NAD(+) + 4 H(+)(out). Its function is as follows. NDH-1 shuttles electrons from NADH, via FMN and iron-sulfur (Fe-S) centers, to quinones in the respiratory chain. The immediate electron acceptor for the enzyme in this species is believed to be ubiquinone. Couples the redox reaction to proton translocation (for every two electrons transferred, four hydrogen ions are translocated across the cytoplasmic membrane), and thus conserves the redox energy in a proton gradient. This chain is NADH-quinone oxidoreductase subunit A, found in Pelagibacter ubique (strain HTCC1062).